The primary structure comprises 135 residues: UPF0306 protein C8J_1355 (135 aa).

This sequence belongs to the UPF0306 family.

The sequence is that of UPF0306 protein C8J_1355 from Campylobacter jejuni subsp. jejuni serotype O:6 (strain 81116 / NCTC 11828).